The chain runs to 266 residues: Type II pantothenate kinase (266 aa).

6-13 (DAGGTLIK) provides a ligand contact to ATP. The Proton acceptor role is filled by Glu70. ATP contacts are provided by residues Thr99, 121 to 125 (GGMIQ), Tyr137, and Ser225.

The protein belongs to the type II pantothenate kinase family. As to quaternary structure, homodimer.

It localises to the cytoplasm. The catalysed reaction is (R)-pantothenate + ATP = (R)-4'-phosphopantothenate + ADP + H(+). Its pathway is cofactor biosynthesis; coenzyme A biosynthesis; CoA from (R)-pantothenate: step 1/5. Functionally, catalyzes the phosphorylation of pantothenate (Pan), the first step in CoA biosynthesis. The chain is Type II pantothenate kinase from Staphylococcus haemolyticus (strain JCSC1435).